Reading from the N-terminus, the 390-residue chain is Protein PIN-LIKES 3 (390 aa).

Residues 1–14 (MVKLLELFITSSKP) are Lumenal-facing. The helical transmembrane segment at 15–35 (VVEILLITSVGFYMALDGVNL) threads the bilayer. The Cytoplasmic portion of the chain corresponds to 36–43 (LGHDARKY). Residues 44–61 (LNNIVFYVFSPSLIGSRL) form a helical membrane-spanning segment. Over 62–76 (ADSVTYESLVKMWFM) the chain is Lumenal. Residues 77–97 (PVNVLLTFIIGSLLGWIVIVI) traverse the membrane as a helical segment. Residues 98–107 (TKPPSHLRGL) are Cytoplasmic-facing. The chain crosses the membrane as a helical span at residues 108-128 (ILGCCAAGNLGNMPLIIIPAV). Topologically, residues 129 to 144 (CKEKGGPFGDPESCQK) are lumenal. Residues 145 to 165 (YGMGYVALSMAMGSIYIWTYV) traverse the membrane as a helical segment. Residues 166 to 227 (YNLMRVLSNS…SLSQKVNLKT (62 aa)) lie on the Cytoplasmic side of the membrane. Residues 228–248 (IFAPSTIAAMIALVIGLITPL) traverse the membrane as a helical segment. The Lumenal portion of the chain corresponds to 249–265 (RKLIIGTEAPLRVLQDS). A helical transmembrane segment spans residues 266–286 (VTLVGDGAVPAMTMIIGGNLL). Over 287–297 (KGLRSSGMKMS) the chain is Cytoplasmic. A helical membrane pass occupies residues 298–318 (SIIGVLVARYVLLPMSGVLIV). At 319–331 (RGAYKLDLVTSEP) the chain is on the lumenal side. A helical transmembrane segment spans residues 332 to 352 (LYQFVLLLQYAVPPAMNLGTI). Residues 353-364 (TQLFGTGESECS) are Cytoplasmic-facing. A helical membrane pass occupies residues 365 to 385 (VIMLWTYSLASIALTVWPTFF). The Lumenal segment spans residues 386–390 (MWLVA).

Belongs to the auxin efflux carrier (TC 2.A.69.2) family. In terms of tissue distribution, expressed in seedlings, rosette and cauline leaves, flowers and siliques.

It is found in the endoplasmic reticulum membrane. Its function is as follows. Involved in cellular auxin homeostasis by regulating auxin metabolism. Regulates intracellular auxin accumulation at the endoplasmic reticulum and thus auxin availability for nuclear auxin signaling. The sequence is that of Protein PIN-LIKES 3 (PILS3) from Arabidopsis thaliana (Mouse-ear cress).